Consider the following 246-residue polypeptide: Bidirectional sugar transporter SWEET3a (246 aa).

The Extracellular segment spans residues 1–6; the sequence is MFPDIR. A helical transmembrane segment spans residues 7 to 27; that stretch reads FIVGIIGSVACMLLYSAPILT. The region spanning 7–96 is the MtN3/slv 1 domain; the sequence is FIVGIIGSVA…ISIYVWFAPR (90 aa). The Cytoplasmic portion of the chain corresponds to 28–42; that stretch reads FKRVIKKASVEEFSC. A helical membrane pass occupies residues 43 to 63; the sequence is IPYILALFSCLTYSWYGFPVV. Topologically, residues 64–74 are extracellular; the sequence is SYGWENMTVCS. A glycan (N-linked (GlcNAc...) asparagine) is linked at Asn69. Residues 75-95 traverse the membrane as a helical segment; the sequence is ISSLGVLFEGTFISIYVWFAP. The Cytoplasmic portion of the chain corresponds to 96–101; the sequence is RGKKKQ. Residues 102–122 form a helical membrane-spanning segment; that stretch reads VMLMASLILAVFCMTVFFSSF. Over 123-131 the chain is Extracellular; it reads SIHNHHIRK. A helical membrane pass occupies residues 132–152; the sequence is VFVGSVGLVSSISMYGSPLVA. Residues 133 to 217 form the MtN3/slv 2 domain; sequence FVGSVGLVSS…VVYCIYSKCK (85 aa). The Cytoplasmic segment spans residues 153 to 166; the sequence is MKQVIRTKSVEFMP. The helical transmembrane segment at 167 to 187 threads the bilayer; sequence FYLSLFTLFTSLTWMAYGVIG. Residues 188–191 are Extracellular-facing; the sequence is RDPF. Residues 192-212 form a helical membrane-spanning segment; it reads IATPNCIGSIMGILQLVVYCI. Residues 213-246 lie on the Cytoplasmic side of the membrane; sequence YSKCKEAPKVLHDIEQANVVKIPTSHVDTKGHNP.

It belongs to the SWEET sugar transporter family. Forms homooligomers and/or heterooligomers.

It is found in the cell membrane. Functionally, mediates both low-affinity uptake and efflux of sugar across the plasma membrane. The protein is Bidirectional sugar transporter SWEET3a (SWEET3A) of Oryza sativa subsp. japonica (Rice).